Reading from the N-terminus, the 325-residue chain is Ribose-phosphate pyrophosphokinase 2 (325 aa).

96–101 (RQDKKD) serves as a coordination point for ATP. The Mg(2+) site is built by Asp135, His137, Asp146, and Asp150. Residue His137 participates in ATP binding. Residues 219–234 (KDRVAILVDDMADTCG) are binding of phosphoribosylpyrophosphate.

The protein belongs to the ribose-phosphate pyrophosphokinase family. Homodimer. The active form is probably a hexamer composed of 3 homodimers. Mg(2+) is required as a cofactor.

It catalyses the reaction D-ribose 5-phosphate + ATP = 5-phospho-alpha-D-ribose 1-diphosphate + AMP + H(+). The protein operates within metabolic intermediate biosynthesis; 5-phospho-alpha-D-ribose 1-diphosphate biosynthesis; 5-phospho-alpha-D-ribose 1-diphosphate from D-ribose 5-phosphate (route I): step 1/1. Its activity is regulated as follows. Activated by magnesium and inorganic phosphate. Competitively or non-competitively inhibited by ADP, 2,3-bisphosphoglyceride or GDP. Functionally, catalyzes the synthesis of phosphoribosylpyrophosphate (PRPP) that is essential for nucleotide synthesis. This Gallus gallus (Chicken) protein is Ribose-phosphate pyrophosphokinase 2 (PRPS2).